Consider the following 364-residue polypeptide: Aminomethyltransferase (364 aa).

It belongs to the GcvT family. As to quaternary structure, the glycine cleavage system is composed of four proteins: P, T, L and H.

The catalysed reaction is N(6)-[(R)-S(8)-aminomethyldihydrolipoyl]-L-lysyl-[protein] + (6S)-5,6,7,8-tetrahydrofolate = N(6)-[(R)-dihydrolipoyl]-L-lysyl-[protein] + (6R)-5,10-methylene-5,6,7,8-tetrahydrofolate + NH4(+). Functionally, the glycine cleavage system catalyzes the degradation of glycine. The polypeptide is Aminomethyltransferase (Salmonella dublin (strain CT_02021853)).